The sequence spans 208 residues: FMN-dependent NADH:quinone oxidoreductase (208 aa).

Residues Ser-10, Ser-16 to Ser-18, Met-94 to Phe-97, and Ser-138 to Gly-141 contribute to the FMN site.

This sequence belongs to the azoreductase type 1 family. As to quaternary structure, homodimer. FMN serves as cofactor.

It catalyses the reaction 2 a quinone + NADH + H(+) = 2 a 1,4-benzosemiquinone + NAD(+). The enzyme catalyses N,N-dimethyl-1,4-phenylenediamine + anthranilate + 2 NAD(+) = 2-(4-dimethylaminophenyl)diazenylbenzoate + 2 NADH + 2 H(+). Quinone reductase that provides resistance to thiol-specific stress caused by electrophilic quinones. In terms of biological role, also exhibits azoreductase activity. Catalyzes the reductive cleavage of the azo bond in aromatic azo compounds to the corresponding amines. The protein is FMN-dependent NADH:quinone oxidoreductase of Hyphomonas neptunium (strain ATCC 15444).